A 167-amino-acid chain; its full sequence is Transmembrane protein 229B (167 aa).

At 1–14 (MAAAEPLTAFSRWY) the chain is on the cytoplasmic side. Residues 15-35 (LYAIHGYFCEVMFTAAWEFVV) traverse the membrane as a helical segment. The Extracellular segment spans residues 36–40 (NFNWK). The helical transmembrane segment at 41 to 61 (FPGVTSVWALFIYGTSILIVE) threads the bilayer. The Cytoplasmic segment spans residues 62 to 72 (KMYLYLKDKCH). A helical transmembrane segment spans residues 73–93 (ILVRCFIYTLWTYLWEFTTGL). At 94 to 109 (ILRQFNACPWDYSQFD) the chain is on the extracellular side. Residues 110–130 (FDFMGLITLEYAIPWFCASFI) traverse the membrane as a helical segment. The Cytoplasmic segment spans residues 131–167 (MEQLVIRNTLRLRFDETAEPGAPTVPVALANGHVKTD).

It belongs to the TMEM229 family.

It localises to the membrane. The sequence is that of Transmembrane protein 229B (TMEM229B) from Gallus gallus (Chicken).